A 294-amino-acid polypeptide reads, in one-letter code: MFKGSIVALITPMNEEGEICHSSLKKLIDYHVLNKTKAIVSIGTTGESATLSQEEHIEVVMLTLKLANKRIPIIAGTGANATTEAISLTKRFEKSGIEACLTVTPYYNKPTQEGLYQHFKAISENTKLPQILYNVPSRTGCDLLPSTVARLSEFKNIIGIKEATGDLSRIHKIKKLVKDDFLLISGDDPTALDFIQLGGQGVISVTANIAAKEMTQMCSYALEGNFKSARSINERLMLLHESLFIEPNPIPIKWLAKKIGLIKSDTLRLPMTPILNSTRTQIEKALQYANLQKI.

T45 is a binding site for pyruvate. The active-site Proton donor/acceptor is Y133. The active-site Schiff-base intermediate with substrate is K161. I203 provides a ligand contact to pyruvate.

The protein belongs to the DapA family. Homotetramer; dimer of dimers.

The protein localises to the cytoplasm. The catalysed reaction is L-aspartate 4-semialdehyde + pyruvate = (2S,4S)-4-hydroxy-2,3,4,5-tetrahydrodipicolinate + H2O + H(+). It functions in the pathway amino-acid biosynthesis; L-lysine biosynthesis via DAP pathway; (S)-tetrahydrodipicolinate from L-aspartate: step 3/4. Its function is as follows. Catalyzes the condensation of (S)-aspartate-beta-semialdehyde [(S)-ASA] and pyruvate to 4-hydroxy-tetrahydrodipicolinate (HTPA). This Buchnera aphidicola subsp. Schizaphis graminum (strain Sg) protein is 4-hydroxy-tetrahydrodipicolinate synthase.